The chain runs to 259 residues: Global transcriptional regulator CodY (259 aa).

Residues 1–155 form a GAF domain region; it reads MTLLEKTRKI…GGTVVGMEIL (155 aa). The segment at residues 203–222 is a DNA-binding region (H-T-H motif); the sequence is ASKIADRVGITRSVIVNALR.

Belongs to the CodY family.

It is found in the cytoplasm. Functionally, DNA-binding global transcriptional regulator which is involved in the adaptive response to starvation and acts by directly or indirectly controlling the expression of numerous genes in response to nutrient availability. During rapid exponential growth, CodY is highly active and represses genes whose products allow adaptation to nutrient depletion. The polypeptide is Global transcriptional regulator CodY (Listeria monocytogenes serotype 4b (strain CLIP80459)).